Here is a 739-residue protein sequence, read N- to C-terminus: Pre-mRNA-splicing factor ATP-dependent RNA helicase ddx-15 (739 aa).

A compositionally biased stretch (basic and acidic residues) spans 1 to 19; that stretch reads MSSRHRLDLDGSGRGDRRR. The segment at 1–49 is disordered; that stretch reads MSSRHRLDLDGSGRGDRRRSPNRRSRSRSRSPHRRSSPDRKRQIGAVGN. A compositionally biased stretch (basic residues) spans 20 to 35; it reads SPNRRSRSRSRSPHRR. Residues 86-257 form the Helicase ATP-binding domain; that stretch reads MELLRNNQCI…FEDCPLLSVP (172 aa). Residue 99-106 participates in ATP binding; sequence GETGSGKT. A DEAH box motif is present at residues 204-207; the sequence is DEAH. In terms of domain architecture, Helicase C-terminal spans 282–462; the sequence is TVIQIHMVEE…SVVLQLKKLG (181 aa).

This sequence belongs to the DEAD box helicase family. DEAH subfamily. DDX15/PRP43 sub-subfamily.

It is found in the nucleus. It carries out the reaction ATP + H2O = ADP + phosphate + H(+). Functionally, pre-mRNA processing factor involved in disassembly of spliceosomes after the release of mature mRNA. This is Pre-mRNA-splicing factor ATP-dependent RNA helicase ddx-15 from Caenorhabditis elegans.